Consider the following 350-residue polypeptide: 2-oxoglutarate and iron-dependent oxygenase domain-containing protein 2 (350 aa).

Positions 215-309 constitute a Fe2OG dioxygenase domain; the sequence is DSHRAFVVKY…RWNLVVWLRA (95 aa). Positions 235, 237, and 290 each coordinate Fe cation. Residue R300 participates in 2-oxoglutarate binding.

It belongs to the OGFOD2 family. Requires Fe(2+) as cofactor. The cofactor is L-ascorbate.

The chain is 2-oxoglutarate and iron-dependent oxygenase domain-containing protein 2 (OGFOD2) from Homo sapiens (Human).